Consider the following 501-residue polypeptide: Dipeptide and tripeptide permease A (501 aa).

Topologically, residues 1–21 (MSTANKKPTESVSLNAFKQPK) are cytoplasmic. The helical transmembrane segment at 22–44 (AFYLIFSIELWERFGYYGLQGIM) threads the bilayer. Residues 45-59 (AVYLVKQLGMSEADS) are Periplasmic-facing. The helical transmembrane segment at 60–80 (ITLFSSFSALVYGLVAIGGWL) threads the bilayer. Over 81 to 89 (GDKILGTKR) the chain is Cytoplasmic. Residues 90 to 110 (VIMLGAVVLAIGYALVAWSGH) form a helical membrane-spanning segment. Residue aspartate 111 is a topological domain, periplasmic. Residues 112 to 132 (AGIVYMGMAAIAVGNGLFKAN) form a helical membrane-spanning segment. Residues 133 to 153 (PSSLLSTCYAKDDPRLDGAFT) lie on the Cytoplasmic side of the membrane. The chain crosses the membrane as a helical span at residues 154–174 (MYYMSVNIGSFFSMLATPWLA). Over 175 to 178 (ARYG) the chain is Periplasmic. Residues 179-199 (WSTAFALSVVGMLITVVNFAF) traverse the membrane as a helical segment. The Cytoplasmic portion of the chain corresponds to 200 to 219 (CQRWVKSYGSKPDFEPINFR). The helical transmembrane segment at 220-240 (NLLLTIVGIVVLIAVATWLLH) threads the bilayer. At 241 to 246 (NQDIAR) the chain is on the periplasmic side. Residues 247-267 (MVLGVIALGIVIIFGKEAFSM) form a helical membrane-spanning segment. The Cytoplasmic portion of the chain corresponds to 268-274 (HGAARRK). The helical transmembrane segment at 275–295 (MIVAFILMLQAIIFFVLYSQM) threads the bilayer. The Periplasmic segment spans residues 296-320 (PTSLNFFAIRNVEHSILGIAFEPEQ). A helical membrane pass occupies residues 321–341 (YQALNPFWIIIGSPILAAIYN). At 342–352 (RMGDTLPMPMK) the chain is on the cytoplasmic side. The chain crosses the membrane as a helical span at residues 353–373 (FAIGMVLCSGAFLILPLGAKF). Residues 374–383 (ANDAGIVSVN) lie on the Periplasmic side of the membrane. Residues 384–404 (WLIASYGLQSIGELMISGLGL) form a helical membrane-spanning segment. Residues 405–414 (AMVAQLVPQR) are Cytoplasmic-facing. The helical transmembrane segment at 415 to 435 (LMGFIMGSWFLTTAGANIIGG) threads the bilayer. Topologically, residues 436–459 (YVANLMAVPSDVTDPLMSLEVYGR) are periplasmic. The helical transmembrane segment at 460–480 (VFMQIGIATAVIAVLMLLTAP) threads the bilayer. The Cytoplasmic segment spans residues 481-501 (KLNRMTQDDDTAEKGSKAATV).

This sequence belongs to the major facilitator superfamily. Proton-dependent oligopeptide transporter (POT/PTR) (TC 2.A.17) family. DtpA subfamily.

It is found in the cell inner membrane. Proton-dependent permease that transports di- and tripeptides. This is Dipeptide and tripeptide permease A from Salmonella typhimurium (strain LT2 / SGSC1412 / ATCC 700720).